Reading from the N-terminus, the 202-residue chain is uncharacterized protein (202 aa).

This is an uncharacterized protein from Bacillus anthracis.